Consider the following 215-residue polypeptide: Oligoribonuclease (215 aa).

In terms of domain architecture, Exonuclease spans 5-170 (LVWIDCEMTG…ADIHESIREL (166 aa)). The active site involves tyrosine 127. The disordered stretch occupies residues 196 to 215 (LGPPGKDAADTDSAAGHTTG).

This sequence belongs to the oligoribonuclease family.

It is found in the cytoplasm. Its function is as follows. 3'-to-5' exoribonuclease specific for small oligoribonucleotides. This chain is Oligoribonuclease, found in Mycobacterium sp. (strain JLS).